A 109-amino-acid polypeptide reads, in one-letter code: Small ribosomal subunit protein uS17 (109 aa).

It belongs to the universal ribosomal protein uS17 family. Part of the 30S ribosomal subunit.

One of the primary rRNA binding proteins, it binds specifically to the 5'-end of 16S ribosomal RNA. The protein is Small ribosomal subunit protein uS17 of Thermoplasma acidophilum (strain ATCC 25905 / DSM 1728 / JCM 9062 / NBRC 15155 / AMRC-C165).